Here is a 108-residue protein sequence, read N- to C-terminus: UPF0060 membrane protein Spro_2289 (108 aa).

The next 4 helical transmembrane spans lie at 6–26, 31–51, 61–81, and 85–105; these read LLFF…YLWL, SAWL…LLTL, AAYG…VDGV, and ALDW…VSGW.

It belongs to the UPF0060 family.

The protein localises to the cell inner membrane. In Serratia proteamaculans (strain 568), this protein is UPF0060 membrane protein Spro_2289.